The chain runs to 747 residues: MFLTKTLIRRSLSTFASSPSDSLLADKALTFLKRHPYQLHHLSANFTPEAASNLLLKSQNDQALILKFLNWANPHQFFTLRCKCITLHILTKFKLYKTAQILAEDVAAKTLDDEYASLVFKSLQETYDLCYSTSSVFDLVVKSYSRLSLIDKALSIVHLAQAHGFMPGVLSYNAVLDATIRSKRNISFAENVFKEMLESQVSPNVFTYNILIRGFCFAGNIDVALTLFDKMETKGCLPNVVTYNTLIDGYCKLRKIDDGFKLLRSMALKGLEPNLISYNVVINGLCREGRMKEVSFVLTEMNRRGYSLDEVTYNTLIKGYCKEGNFHQALVMHAEMLRHGLTPSVITYTSLIHSMCKAGNMNRAMEFLDQMRVRGLCPNERTYTTLVDGFSQKGYMNEAYRVLREMNDNGFSPSVVTYNALINGHCVTGKMEDAIAVLEDMKEKGLSPDVVSYSTVLSGFCRSYDVDEALRVKREMVEKGIKPDTITYSSLIQGFCEQRRTKEACDLYEEMLRVGLPPDEFTYTALINAYCMEGDLEKALQLHNEMVEKGVLPDVVTYSVLINGLNKQSRTREAKRLLLKLFYEESVPSDVTYHTLIENCSNIEFKSVVSLIKGFCMKGMMTEADQVFESMLGKNHKPDGTAYNIMIHGHCRAGDIRKAYTLYKEMVKSGFLLHTVTVIALVKALHKEGKVNELNSVIVHVLRSCELSEAEQAKVLVEINHREGNMDVVLDVLAEMAKDGFLPNGIS.

PPR repeat units lie at residues threonine 133–proline 167, glycine 168–proline 203, asparagine 204–proline 238, asparagine 239–proline 273, asparagine 274–leucine 308, aspartate 309–proline 343, serine 344–proline 378, asparagine 379–proline 413, serine 414–proline 448, aspartate 449–proline 483, aspartate 484–proline 518, aspartate 519–proline 553, aspartate 554–proline 588, glutamate 604–proline 638, and aspartate 639–leucine 673.

The protein belongs to the PPR family. P subfamily.

In Arabidopsis thaliana (Mouse-ear cress), this protein is Pentatricopeptide repeat-containing protein At5g39710 (EMB2745).